Here is a 403-residue protein sequence, read N- to C-terminus: Imidazolonepropionase (403 aa).

Positions 69 and 71 each coordinate Fe(3+). H69 and H71 together coordinate Zn(2+). 3 residues coordinate 4-imidazolone-5-propanoate: R78, Y141, and H174. Y141 contacts N-formimidoyl-L-glutamate. H239 lines the Fe(3+) pocket. H239 provides a ligand contact to Zn(2+). Q242 serves as a coordination point for 4-imidazolone-5-propanoate. D314 contributes to the Fe(3+) binding site. Zn(2+) is bound at residue D314. Positions 316 and 318 each coordinate N-formimidoyl-L-glutamate. S319 serves as a coordination point for 4-imidazolone-5-propanoate.

It belongs to the metallo-dependent hydrolases superfamily. HutI family. Requires Zn(2+) as cofactor. Fe(3+) serves as cofactor.

The protein resides in the cytoplasm. It carries out the reaction 4-imidazolone-5-propanoate + H2O = N-formimidoyl-L-glutamate. Its pathway is amino-acid degradation; L-histidine degradation into L-glutamate; N-formimidoyl-L-glutamate from L-histidine: step 3/3. Functionally, catalyzes the hydrolytic cleavage of the carbon-nitrogen bond in imidazolone-5-propanoate to yield N-formimidoyl-L-glutamate. It is the third step in the universal histidine degradation pathway. This is Imidazolonepropionase from Legionella pneumophila (strain Lens).